The primary structure comprises 314 residues: Cyclin-dependent kinase 2 (314 aa).

Positions 8–287 (FQRAEKIGEG…AKDALQHAYF (280 aa)) constitute a Protein kinase domain. Residues 14-22 (IGEGTYGIV) and Lys-37 contribute to the ATP site. Residue Thr-18 is modified to Phosphothreonine. Residue Tyr-19 is modified to Phosphotyrosine. Asp-130 (proton acceptor) is an active-site residue. Tyr-162 carries the post-translational modification Phosphotyrosine. At Thr-163 the chain carries Phosphothreonine.

Belongs to the protein kinase superfamily. CMGC Ser/Thr protein kinase family. CDC2/CDKX subfamily. As to quaternary structure, interacts with cyclin CycG.

It carries out the reaction L-seryl-[protein] + ATP = O-phospho-L-seryl-[protein] + ADP + H(+). The catalysed reaction is L-threonyl-[protein] + ATP = O-phospho-L-threonyl-[protein] + ADP + H(+). The enzyme catalyses [DNA-directed RNA polymerase] + ATP = phospho-[DNA-directed RNA polymerase] + ADP + H(+). Its function is as follows. Like Cdk1, could play a key role in the control of the eukaryotic cell cycle. In Drosophila melanogaster (Fruit fly), this protein is Cyclin-dependent kinase 2.